The following is a 278-amino-acid chain: 3-methyl-2-oxobutanoate hydroxymethyltransferase (278 aa).

Mg(2+)-binding residues include aspartate 49 and aspartate 88. 3-methyl-2-oxobutanoate contacts are provided by residues 49–50 (DS), aspartate 88, and lysine 118. Glutamate 120 is a Mg(2+) binding site. Glutamate 186 serves as the catalytic Proton acceptor.

Belongs to the PanB family. As to quaternary structure, homodecamer; pentamer of dimers. It depends on Mg(2+) as a cofactor.

It localises to the cytoplasm. It catalyses the reaction 3-methyl-2-oxobutanoate + (6R)-5,10-methylene-5,6,7,8-tetrahydrofolate + H2O = 2-dehydropantoate + (6S)-5,6,7,8-tetrahydrofolate. It functions in the pathway cofactor biosynthesis; (R)-pantothenate biosynthesis; (R)-pantoate from 3-methyl-2-oxobutanoate: step 1/2. In terms of biological role, catalyzes the reversible reaction in which hydroxymethyl group from 5,10-methylenetetrahydrofolate is transferred onto alpha-ketoisovalerate to form ketopantoate. The sequence is that of 3-methyl-2-oxobutanoate hydroxymethyltransferase from Bordetella parapertussis (strain 12822 / ATCC BAA-587 / NCTC 13253).